Reading from the N-terminus, the 161-residue chain is Myosin regulatory light chain (161 aa).

Phosphoserine occurs at positions 13 and 14. 3 EF-hand domains span residues 20-55 (EQVA…FGVF), 56-91 (VMED…RMKQ), and 93-128 (SNEQ…LGDK).

As to quaternary structure, myosin is a hexamer of 2 heavy chains and 4 light chains (two regulatory light chains and two essential light chains).

This Dictyostelium discoideum (Social amoeba) protein is Myosin regulatory light chain (mlcR).